Here is a 503-residue protein sequence, read N- to C-terminus: UDP-N-acetylmuramoylalanine--D-glutamate ligase (503 aa).

129–135 (GTNGKTT) contributes to the ATP binding site.

Belongs to the MurCDEF family.

The protein resides in the cytoplasm. The catalysed reaction is UDP-N-acetyl-alpha-D-muramoyl-L-alanine + D-glutamate + ATP = UDP-N-acetyl-alpha-D-muramoyl-L-alanyl-D-glutamate + ADP + phosphate + H(+). The protein operates within cell wall biogenesis; peptidoglycan biosynthesis. Its function is as follows. Cell wall formation. Catalyzes the addition of glutamate to the nucleotide precursor UDP-N-acetylmuramoyl-L-alanine (UMA). This is UDP-N-acetylmuramoylalanine--D-glutamate ligase from Burkholderia orbicola (strain MC0-3).